Reading from the N-terminus, the 86-residue chain is Omega-theraphotoxin-Hhn1d (86 aa).

The N-terminal stretch at 1–21 is a signal peptide; the sequence is MKSIVFVALFGLALLAVVCSA. The propeptide occupies 22–50; the sequence is SEDAHKELLKEVVRAMVVDKTDAVQAEER. Disulfide bonds link C52-C66, C59-C71, and C65-C78.

It belongs to the neurotoxin 10 (Hwtx-1) family. 17 (Hntx-9) subfamily. Expressed by the venom gland.

The protein localises to the secreted. In terms of biological role, ion channel inhibitor. The protein is Omega-theraphotoxin-Hhn1d of Cyriopagopus hainanus (Chinese bird spider).